Reading from the N-terminus, the 173-residue chain is Ribulose bisphosphate carboxylase small subunit, chloroplastic 3 (173 aa).

Residues 1 to 49 (MASIPATVATVAQANMVAPFTGLKSNAAFPVTKKVNDFSTLPSNGGRVQ) constitute a chloroplast transit peptide.

This sequence belongs to the RuBisCO small chain family. In terms of assembly, heterohexadecamer of 8 large and 8 small subunits.

The protein localises to the plastid. The protein resides in the chloroplast. Its function is as follows. RuBisCO catalyzes two reactions: the carboxylation of D-ribulose 1,5-bisphosphate, the primary event in carbon dioxide fixation, as well as the oxidative fragmentation of the pentose substrate. Both reactions occur simultaneously and in competition at the same active site. Although the small subunit is not catalytic it is essential for maximal activity. The protein is Ribulose bisphosphate carboxylase small subunit, chloroplastic 3 of Flaveria pringlei.